A 95-amino-acid polypeptide reads, in one-letter code: Small ribosomal subunit protein bS6 (95 aa).

It belongs to the bacterial ribosomal protein bS6 family.

Functionally, binds together with bS18 to 16S ribosomal RNA. This Bacillus pumilus (strain SAFR-032) protein is Small ribosomal subunit protein bS6.